Here is a 183-residue protein sequence, read N- to C-terminus: Adenine phosphoribosyltransferase (183 aa).

Belongs to the purine/pyrimidine phosphoribosyltransferase family. As to quaternary structure, homodimer.

It is found in the cytoplasm. The enzyme catalyses AMP + diphosphate = 5-phospho-alpha-D-ribose 1-diphosphate + adenine. It functions in the pathway purine metabolism; AMP biosynthesis via salvage pathway; AMP from adenine: step 1/1. Functionally, catalyzes a salvage reaction resulting in the formation of AMP, that is energically less costly than de novo synthesis. The protein is Adenine phosphoribosyltransferase of Shewanella oneidensis (strain ATCC 700550 / JCM 31522 / CIP 106686 / LMG 19005 / NCIMB 14063 / MR-1).